A 311-amino-acid chain; its full sequence is Succinate dehydrogenase [ubiquinone] iron-sulfur subunit 2, mitochondrial (311 aa).

The transit peptide at 1–63 (MILRRTLPRL…EEIRDHRRGD (63 aa)) directs the protein to the mitochondrion. The tract at residues 1–70 (MILRRTLPRL…RGDAAAASPA (70 aa)) is disordered. Residues 51-63 (AKEEEIRDHRRGD) show a composition bias toward basic and acidic residues. In terms of domain architecture, 2Fe-2S ferredoxin-type spans 77–168 (FRVYRWSPDA…ATTVTPLPHM (92 aa)). [2Fe-2S] cluster is bound by residues C128, C133, and C148. The 4Fe-4S ferredoxin-type domain maps to 211 to 241 (ERKRLDGLYECILCACCSAACPSYWWNAEAF). Residues C221, C224, and C227 each coordinate [4Fe-4S] cluster. Residue C231 participates in [3Fe-4S] cluster binding. W236 provides a ligand contact to a ubiquinone. C279 and C285 together coordinate [3Fe-4S] cluster. C289 contacts [4Fe-4S] cluster.

The protein belongs to the succinate dehydrogenase/fumarate reductase iron-sulfur protein family. As to quaternary structure, component of complex II composed of eight subunits in plants: four classical SDH subunits SDH1, SDH2, SDH3 and SDH4 (a flavoprotein (FP), an iron-sulfur protein (IP), and a cytochrome b composed of a large and a small subunit.), as well as four subunits unknown in mitochondria from bacteria and heterotrophic eukaryotes. It depends on [2Fe-2S] cluster as a cofactor. [3Fe-4S] cluster serves as cofactor. The cofactor is [4Fe-4S] cluster.

The protein localises to the mitochondrion inner membrane. It carries out the reaction a quinone + succinate = fumarate + a quinol. It participates in carbohydrate metabolism; tricarboxylic acid cycle; fumarate from succinate (eukaryal route): step 1/1. In terms of biological role, iron-sulfur protein (IP) subunit of succinate dehydrogenase (SDH) that is involved in complex II of the mitochondrial electron transport chain and is responsible for transferring electrons from succinate to ubiquinone (coenzyme Q). The polypeptide is Succinate dehydrogenase [ubiquinone] iron-sulfur subunit 2, mitochondrial (Oryza sativa subsp. japonica (Rice)).